The sequence spans 445 residues: Ribosomal protein uS12 methylthiotransferase RimO (445 aa).

The MTTase N-terminal domain occupies 4–119; the sequence is IKVALVSLGC…LLESIKVFLK (116 aa). Residues Cys-13, Cys-48, Cys-82, Cys-156, Cys-160, and Cys-163 each contribute to the [4Fe-4S] cluster site. One can recognise a Radical SAM core domain in the interval 142-372; that stretch reads TTPTYTAYVR…MILQQSISKD (231 aa). Positions 375–441 constitute a TRAM domain; sequence KEKIGKIYEV…EYDLIGVVYN (67 aa).

Belongs to the methylthiotransferase family. RimO subfamily. [4Fe-4S] cluster serves as cofactor.

It is found in the cytoplasm. It catalyses the reaction L-aspartate(89)-[ribosomal protein uS12]-hydrogen + (sulfur carrier)-SH + AH2 + 2 S-adenosyl-L-methionine = 3-methylsulfanyl-L-aspartate(89)-[ribosomal protein uS12]-hydrogen + (sulfur carrier)-H + 5'-deoxyadenosine + L-methionine + A + S-adenosyl-L-homocysteine + 2 H(+). In terms of biological role, catalyzes the methylthiolation of an aspartic acid residue of ribosomal protein uS12. The protein is Ribosomal protein uS12 methylthiotransferase RimO of Clostridium botulinum (strain Loch Maree / Type A3).